A 799-amino-acid chain; its full sequence is Protein-lysine N-methyltransferase SMYD4 (799 aa).

112–114 (RSA) lines the S-adenosyl-L-methionine pocket. Residues 233–570 (LSVSLCTHPL…KGQEILHCYG (338 aa)) form the SET domain. Positions 296, 299, 309, 312, 318, 322, 331, and 335 each coordinate Zn(2+). The MYND-type zinc-finger motif lies at 296–335 (CHRCLKHTLATVPCGSCSYAKYCSQECMQQAWDLYHSTEC). Residues 535–536 (NH), Tyr569, and Phe591 each bind S-adenosyl-L-methionine.

It belongs to the class V-like SAM-binding methyltransferase superfamily. As to quaternary structure, interacts (via MYND-type zinc finger) with HDAC1.

The protein resides in the nucleus. It localises to the cytoplasm. The catalysed reaction is L-lysyl-[protein] + S-adenosyl-L-methionine = N(6)-methyl-L-lysyl-[protein] + S-adenosyl-L-homocysteine + H(+). Its function is as follows. Protein-lysine N-methyltransferase. Monomethylates PRMT5, modulating its transcriptional activity. May also act as a histone methyltransferase. Plays a critical role in cardiac development. Acts as a key epigenetic regulator of gene expression during cardiac development via its dual activities as a methyltransferase and negative regulator of HDAC1. In Mus musculus (Mouse), this protein is Protein-lysine N-methyltransferase SMYD4 (Smyd4).